Here is a 1287-residue protein sequence, read N- to C-terminus: Vacuolating cytotoxin autotransporter (1287 aa).

The N-terminal stretch at 1–33 (MEIQQTHRKINRPLVSLALVGALVSITPQQSHA) is a signal peptide. Residues 326-381 (PPEGGYKDKPNNTPSQSGAKNDKQESSQNNSNTQVINPPNSTQKTEVQPTQVIDGP) are disordered. The span at 351 to 376 (SSQNNSNTQVINPPNSTQKTEVQPTQ) shows a compositional bias: polar residues. Residues 1014 to 1287 (KYEKPTNVWA…ASNLGMRYSF (274 aa)) enclose the Autotransporter domain.

It is found in the periplasm. Its subcellular location is the secreted. The protein resides in the cell surface. It localises to the cell outer membrane. Functionally, induces vacuolation of eukaryotic cells. Causes ulceration and gastric lesions. In Helicobacter pylori (Campylobacter pylori), this protein is Vacuolating cytotoxin autotransporter (vacA).